The chain runs to 556 residues: Undecaprenyl phosphate-alpha-4-amino-4-deoxy-L-arabinose arabinosyl transferase (556 aa).

11 helical membrane-spanning segments follow: residues 5–25 (MIKL…LLPL), 88–108 (FASV…ALLL), 116–136 (LLAA…TYSV), 179–199 (FMTK…PVAL), 207–227 (LLLF…PWAL), 258–278 (APFW…LALL), 296–316 (FLLL…KGKL), 319–339 (YILP…SGLA), 355–375 (LAFG…IIMP), 384–404 (LTIV…AVSL), and 410–430 (WGYL…GSIP).

This sequence belongs to the glycosyltransferase 83 family.

It is found in the cell inner membrane. It catalyses the reaction 4-amino-4-deoxy-alpha-L-arabinopyranosyl di-trans,octa-cis-undecaprenyl phosphate + lipid IVA = lipid IIA + di-trans,octa-cis-undecaprenyl phosphate.. The protein operates within lipopolysaccharide metabolism; 4-amino-4-deoxy-beta-L-arabinose-lipid A biosynthesis. Functionally, catalyzes the transfer of the L-Ara4N moiety of the glycolipid undecaprenyl phosphate-alpha-L-Ara4N to lipid A. The modified arabinose is attached to lipid A and is required for resistance to polymyxin and cationic antimicrobial peptides. This is Undecaprenyl phosphate-alpha-4-amino-4-deoxy-L-arabinose arabinosyl transferase from Pectobacterium carotovorum subsp. carotovorum (strain PC1).